Here is a 153-residue protein sequence, read N- to C-terminus: Protein ElaA (153 aa).

One can recognise an N-acetyltransferase domain in the interval 7–151 (LHHSELSVSQ…PHIGMAREVI (145 aa)).

Belongs to the UPF0039 (ElaA) family.

The chain is Protein ElaA (elaA) from Escherichia coli (strain K12).